A 425-amino-acid polypeptide reads, in one-letter code: MEKYIKEHTLKPNEIERYGRQLITPDIGVSGQMSLCNSSVLIIGAGGLGCPVALYLSSAGIGTLGLVDYDTVEISNLHRQIGHRESSKGISKAVSLSKTISELNSLIKVNTYETTFTSETAMEIIKNYDIVVDASDNVATRYLVNDACVLTGKPLVSGSALKWEGQITCYNYNNGPCYRCIFPTPPPVETVTKCSDGGVLGPIVGVIGSLQALEVIKILTNNKEGVLSGRLLIYDGMSAVFRTVRIRGKQSGCNVCGDKPTVTQLIDYTQFCQSNYSESAGKVDDRVDKTLIITVEQFNQSIKNNNNNHLLIDVRPKIQFDICSLPNSNNIPIEEIDKKESIEIIEKLIKEKVENNNNNNNNNENRDASDELSVYLVCRRGNKSQDAVKILDEKLKEFRDKFKLLHIKDGLLGWNESIDDSFPIY.

Residues Gly-47, Asp-68, 75–79 (SNLHR), Lys-92, and 136–137 (DN) each bind ATP. Zn(2+)-binding residues include Cys-177 and Cys-180. The active-site Glycyl thioester intermediate; for adenylyltransferase activity is the Cys-194. 2 residues coordinate Zn(2+): Cys-253 and Cys-256. One can recognise a Rhodanese domain in the interval 305-423 (NNNNHLLIDV…WNESIDDSFP (119 aa)). The active-site Cysteine persulfide intermediate; for sulfurtransferase activity is the Cys-378.

The protein in the N-terminal section; belongs to the HesA/MoeB/ThiF family. UBA4 subfamily. The cofactor is Zn(2+).

Its subcellular location is the cytoplasm. It localises to the cytosol. The catalysed reaction is [molybdopterin-synthase sulfur-carrier protein]-C-terminal Gly-Gly + ATP + H(+) = [molybdopterin-synthase sulfur-carrier protein]-C-terminal Gly-Gly-AMP + diphosphate. The enzyme catalyses [molybdopterin-synthase sulfur-carrier protein]-C-terminal Gly-Gly-AMP + S-sulfanyl-L-cysteinyl-[cysteine desulfurase] + AH2 = [molybdopterin-synthase sulfur-carrier protein]-C-terminal-Gly-aminoethanethioate + L-cysteinyl-[cysteine desulfurase] + A + AMP + 2 H(+). Its pathway is tRNA modification; 5-methoxycarbonylmethyl-2-thiouridine-tRNA biosynthesis. The protein operates within cofactor biosynthesis; molybdopterin biosynthesis. Functionally, plays a central role in 2-thiolation of mcm(5)S(2)U at tRNA wobble positions of cytosolic tRNA(Lys), tRNA(Glu) and tRNA(Gln). Also essential during biosynthesis of the molybdenum cofactor. Acts by mediating the C-terminal thiocarboxylation of sulfur carriers urm1 and mocs2a. Its N-terminus first activates urm1 and mocs2a as acyl-adenylates (-COAMP), then the persulfide sulfur on the catalytic cysteine is transferred to urm1 and mocs2a to form thiocarboxylation (-COSH) of their C-terminus. The reaction probably involves hydrogen sulfide that is generated from the persulfide intermediate and that acts as a nucleophile towards urm1 and mocs2a. Subsequently, a transient disulfide bond is formed. Does not use thiosulfate as sulfur donor; nfs1 probably acting as a sulfur donor for thiocarboxylation reactions. The chain is Adenylyltransferase and sulfurtransferase MOCS3 (mocs3) from Dictyostelium discoideum (Social amoeba).